Here is a 375-residue protein sequence, read N- to C-terminus: 2-heptyl-3-hydroxy-4(1H)-quinolone synthase (375 aa).

Belongs to the 3-hydroxybenzoate 6-hydroxylase family.

It catalyses the reaction 2-heptyl-4(1H)-quinolone + NADH + O2 + H(+) = 2-heptyl-3-hydroxy-4(1H)-quinolone + NAD(+) + H2O. Its function is as follows. Involved in the degradation pathway of the Pseudomonas aeruginosa quorum sensing signal molecule HHQ (2-heptyl-4(1H)-quinolone) to anthranilate. Catalyzes the hydroxylation of HHQ to PQS (2-heptyl-3-hydroxy-4(1H)-quinolone). In Mycobacteroides abscessus (strain ATCC 19977 / DSM 44196 / CCUG 20993 / CIP 104536 / JCM 13569 / NCTC 13031 / TMC 1543 / L948) (Mycobacterium abscessus), this protein is 2-heptyl-3-hydroxy-4(1H)-quinolone synthase.